A 690-amino-acid chain; its full sequence is Protein MODIFIED TRANSPORT TO THE VACUOLE 1 (690 aa).

A VHS domain is found at 20 to 150; that stretch reads VTSDEDKVAP…PESINRRIEG (131 aa). Disordered stretches follow at residues 228-258 and 518-551; these read DGNY…SVRV and FSID…HQAP. Positions 243 to 257 are enriched in low complexity; sequence GHASGEASESSASVR. Residues 520–536 are compositionally biased toward polar residues; the sequence is IDENNSNQKGSSSSTLP.

In terms of assembly, binds to clathrin heavy chain. Expressed in inflorescence stems, stigmas, roots, roots meristems, embryos, and floral and leaf vasculatures, but absent from the floral abscission zone.

Its subcellular location is the golgi apparatus. It localises to the trans-Golgi network. It is found in the cytoplasmic vesicle. The protein resides in the clathrin-coated vesicle. Its function is as follows. Mediates clathrin-dependent trafficking of vacuolar cargo from the trans-Golgi network (TGN). Promotes plant growth. The sequence is that of Protein MODIFIED TRANSPORT TO THE VACUOLE 1 from Arabidopsis thaliana (Mouse-ear cress).